The following is a 453-amino-acid chain: Putative receptor-like protein kinase At2g30940 (453 aa).

A helical membrane pass occupies residues 60–80; sequence ASASIAFLLVLIISVLLCFIF. Thr155 is modified (phosphothreonine). One can recognise a Protein kinase domain in the interval 166 to 428; sequence FADDNVITKG…IHMLQPHDLL (263 aa). Residues 172–180 and Lys194 each bind ATP; that span reads ITKGDSSTV. Tyr240 is modified (phosphotyrosine). The Proton acceptor role is filled by Asp293. Residue Ser297 is modified to Phosphoserine. Thr322 carries the post-translational modification Phosphothreonine.

Belongs to the protein kinase superfamily.

The protein resides in the cell membrane. The catalysed reaction is L-seryl-[protein] + ATP = O-phospho-L-seryl-[protein] + ADP + H(+). It carries out the reaction L-threonyl-[protein] + ATP = O-phospho-L-threonyl-[protein] + ADP + H(+). In Arabidopsis thaliana (Mouse-ear cress), this protein is Putative receptor-like protein kinase At2g30940.